A 266-amino-acid chain; its full sequence is uncharacterized protein (266 aa).

This is an uncharacterized protein from Methanocaldococcus jannaschii (strain ATCC 43067 / DSM 2661 / JAL-1 / JCM 10045 / NBRC 100440) (Methanococcus jannaschii).